The chain runs to 199 residues: Recombination protein RecR (199 aa).

The C4-type zinc-finger motif lies at 58–73 (CSVCFTLSDTPVCAIC). One can recognise a Toprim domain in the interval 81 to 176 (SLLCVVEGPT…TVTRIASGMP (96 aa)).

Belongs to the RecR family.

May play a role in DNA repair. It seems to be involved in an RecBC-independent recombinational process of DNA repair. It may act with RecF and RecO. The protein is Recombination protein RecR of Desulfosudis oleivorans (strain DSM 6200 / JCM 39069 / Hxd3) (Desulfococcus oleovorans).